The primary structure comprises 330 residues: Membrane-associated protein VIPP1, chloroplastic (330 aa).

Residues 1-64 (MALKASPVTG…LRLACDNRLR (64 aa)) constitute a chloroplast transit peptide. 2 coiled-coil regions span residues 124 to 259 (SQKQ…LTQI) and 312 to 329 (KDSEIENELNELRRKAND). Positions 287 to 312 (LSGSSKKGELPPGRSTVAASTRYPFK) are disordered.

Belongs to the PspA/Vipp/IM30 family. Homomultimer. Complex formation involves interaction via the central alpha-helical domain (71-286).

The protein resides in the plastid. It is found in the chloroplast inner membrane. The protein localises to the chloroplast thylakoid membrane. Functionally, required for plastid vesicle formation and thylakoid membrane biogenesis, but not for functional assembly of thylakoid protein complexes. This chain is Membrane-associated protein VIPP1, chloroplastic, found in Arabidopsis thaliana (Mouse-ear cress).